The following is a 298-amino-acid chain: Glutamyl-Q tRNA(Asp) synthetase (298 aa).

Residues 9 to 13 and Glu45 contribute to the L-glutamate site; that span reads RFAPS. Positions 12–22 match the 'HIGH' region motif; that stretch reads PSPSGELHFGS. Residues Cys101, Cys103, Tyr115, and Cys119 each coordinate Zn(2+). Residues Tyr172 and Arg190 each coordinate L-glutamate. The short motif at 228-232 is the 'KMSKS' region element; the sequence is KLSKQ. Residue Lys231 participates in ATP binding.

The protein belongs to the class-I aminoacyl-tRNA synthetase family. GluQ subfamily. Zn(2+) is required as a cofactor.

Functionally, catalyzes the tRNA-independent activation of glutamate in presence of ATP and the subsequent transfer of glutamate onto a tRNA(Asp). Glutamate is transferred on the 2-amino-5-(4,5-dihydroxy-2-cyclopenten-1-yl) moiety of the queuosine in the wobble position of the QUC anticodon. This Citrobacter koseri (strain ATCC BAA-895 / CDC 4225-83 / SGSC4696) protein is Glutamyl-Q tRNA(Asp) synthetase.